The primary structure comprises 429 residues: Glutamate-1-semialdehyde 2,1-aminomutase (429 aa).

The residue at position 267 (lysine 267) is an N6-(pyridoxal phosphate)lysine.

The protein belongs to the class-III pyridoxal-phosphate-dependent aminotransferase family. HemL subfamily. Homodimer. Requires pyridoxal 5'-phosphate as cofactor.

It localises to the cytoplasm. It carries out the reaction (S)-4-amino-5-oxopentanoate = 5-aminolevulinate. It participates in porphyrin-containing compound metabolism; protoporphyrin-IX biosynthesis; 5-aminolevulinate from L-glutamyl-tRNA(Glu): step 2/2. In Anaeromyxobacter sp. (strain Fw109-5), this protein is Glutamate-1-semialdehyde 2,1-aminomutase.